A 156-amino-acid polypeptide reads, in one-letter code: MNIIKANVAAPDARVAITIARFNQFINDSLLDGAVDALTRIGQVKDDNITVVWVPGAYELPLATEALAKSGKYDAVVALGTVIRGGTAHFEYVAGGASNGLASVAQGSGVPVAFGVLTTESIEQAIERAGTKAGNKGAEAALTALEMINVLKAIKA.

5-amino-6-(D-ribitylamino)uracil contacts are provided by residues phenylalanine 22, 57 to 59 (AYE), and 81 to 83 (TVI). 86-87 (GT) is a (2S)-2-hydroxy-3-oxobutyl phosphate binding site. Histidine 89 acts as the Proton donor in catalysis. Residue phenylalanine 114 coordinates 5-amino-6-(D-ribitylamino)uracil. Arginine 128 contributes to the (2S)-2-hydroxy-3-oxobutyl phosphate binding site.

This sequence belongs to the DMRL synthase family. Forms an icosahedral capsid composed of 60 subunits, arranged as a dodecamer of pentamers.

It carries out the reaction (2S)-2-hydroxy-3-oxobutyl phosphate + 5-amino-6-(D-ribitylamino)uracil = 6,7-dimethyl-8-(1-D-ribityl)lumazine + phosphate + 2 H2O + H(+). It participates in cofactor biosynthesis; riboflavin biosynthesis; riboflavin from 2-hydroxy-3-oxobutyl phosphate and 5-amino-6-(D-ribitylamino)uracil: step 1/2. Functionally, catalyzes the formation of 6,7-dimethyl-8-ribityllumazine by condensation of 5-amino-6-(D-ribitylamino)uracil with 3,4-dihydroxy-2-butanone 4-phosphate. This is the penultimate step in the biosynthesis of riboflavin. In Salmonella heidelberg (strain SL476), this protein is 6,7-dimethyl-8-ribityllumazine synthase.